The following is a 410-amino-acid chain: Probable nicotinate phosphoribosyltransferase (410 aa).

Nicotinate contacts are provided by Tyr15, Phe170, and Thr220. At His223 the chain carries Phosphohistidine. Thr348 serves as a coordination point for 5-phospho-alpha-D-ribose 1-diphosphate.

Belongs to the NAPRTase family. Requires Mg(2+) as cofactor. The cofactor is Mn(2+). Transiently phosphorylated on a His residue during the reaction cycle. Phosphorylation strongly increases the affinity for substrates and increases the rate of nicotinate D-ribonucleotide production. Dephosphorylation regenerates the low-affinity form of the enzyme, leading to product release.

The catalysed reaction is nicotinate + 5-phospho-alpha-D-ribose 1-diphosphate + ATP + H2O = nicotinate beta-D-ribonucleotide + ADP + phosphate + diphosphate. It participates in cofactor biosynthesis; NAD(+) biosynthesis; nicotinate D-ribonucleotide from nicotinate: step 1/1. Catalyzes the first step in the biosynthesis of NAD from nicotinic acid, the ATP-dependent synthesis of beta-nicotinate D-ribonucleotide from nicotinate and 5-phospho-D-ribose 1-phosphate. Helps prevent cellular oxidative stress via its role in NAD biosynthesis. In Schizosaccharomyces pombe (strain 972 / ATCC 24843) (Fission yeast), this protein is Probable nicotinate phosphoribosyltransferase.